The sequence spans 338 residues: MTTLRLLISDSYDPWFNLAVEECIFRQMPATQRVLFLWRNADTVVIGRAQNPWKECNTRRMEEDNVRLARRSSGGGAVFHDLGNTCFTFMAGKPEYDKTISTHIVLAALNSLGVMADASGRNDLVVKTPDGDRKVSGSAYRETKDRGFHHGTLLLNADLSRLANYLNPDKKKLAAKGITSVRSRVANLTKLLPGITHQQVCQAVTEAFFAHYGERVDAEVISPDKTPDLPNFAETFARQSSWEWNFGQAPAFSHLLDERFTWGGVELHFDVEKGHITRAQVFTDSLNPAPLEALAGRLQGCLYRADKLQETCEALIATFPEQESELRELASWVAGAVR.

Residues 29-216 enclose the BPL/LPL catalytic domain; it reads PATQRVLFLW…AFFAHYGERV (188 aa). Residues arginine 71, 76-79, and lysine 134 contribute to the ATP site; that span reads GAVF. Lysine 134 contributes to the (R)-lipoate binding site.

It belongs to the LplA family. As to quaternary structure, monomer.

It is found in the cytoplasm. The enzyme catalyses L-lysyl-[lipoyl-carrier protein] + (R)-lipoate + ATP = N(6)-[(R)-lipoyl]-L-lysyl-[lipoyl-carrier protein] + AMP + diphosphate + H(+). It participates in protein modification; protein lipoylation via exogenous pathway; protein N(6)-(lipoyl)lysine from lipoate: step 1/2. Its pathway is protein modification; protein lipoylation via exogenous pathway; protein N(6)-(lipoyl)lysine from lipoate: step 2/2. Its function is as follows. Catalyzes both the ATP-dependent activation of exogenously supplied lipoate to lipoyl-AMP and the transfer of the activated lipoyl onto the lipoyl domains of lipoate-dependent enzymes. The polypeptide is Lipoate-protein ligase A (Salmonella schwarzengrund (strain CVM19633)).